Reading from the N-terminus, the 276-residue chain is Omega-amidase NIT2 (276 aa).

A CN hydrolase domain is found at Phe4–Leu248. Ser26 carries the post-translational modification Phosphoserine. Glu43 serves as the catalytic Proton acceptor. Lys68 carries the N6-acetyllysine; alternate modification. Lys68 is modified (N6-succinyllysine; alternate). Residue Lys112 is the Proton donor of the active site. N6-succinyllysine is present on residues Lys123 and Lys130. Cys153 serves as the catalytic Nucleophile.

As to quaternary structure, homodimer. As to expression, detected in fetal brain (at protein level). Ubiquitous. Detected in heart, brain, placenta, lung, liver, skeletal muscle, kidney, pancreas, prostate, spleen, thymus, prostate, testis, ovary, small intestine and colon.

The protein resides in the cytoplasm. The enzyme catalyses a monoamide of a dicarboxylate + H2O = a dicarboxylate + NH4(+). It catalyses the reaction 2-oxoglutaramate + H2O = 2-oxoglutarate + NH4(+). The catalysed reaction is 2-oxosuccinamate + H2O = oxaloacetate + NH4(+). Its function is as follows. Has omega-amidase activity. The role of omega-amidase is to remove potentially toxic intermediates by converting 2-oxoglutaramate and 2-oxosuccinamate to biologically useful 2-oxoglutarate and oxaloacetate, respectively. The sequence is that of Omega-amidase NIT2 (NIT2) from Homo sapiens (Human).